Consider the following 251-residue polypeptide: Derlin-1 (251 aa).

Serine 2 carries the post-translational modification N-acetylserine. The Cytoplasmic portion of the chain corresponds to 2–15; sequence SDIGDWFRSIPAIT. The helical transmembrane segment at 16–31 threads the bilayer; sequence RYWFAATVAVPLVGKL. Topologically, residues 32–69 are lumenal; it reads GLISPAYLFLWPEAFLYRFQIWRPITATFYFPVGPGTG. Residues 70–89 traverse the membrane as a helical segment; that stretch reads FLYLVNLYFLYQYSTRLETG. The Cytoplasmic portion of the chain corresponds to 90–94; it reads AFDGR. The chain crosses the membrane as a helical span at residues 95-115; the sequence is PADYLFMLLFNWICIVITGLA. Over 116 to 122 the chain is Lumenal; the sequence is MDMQLLM. Residues 123-137 traverse the membrane as a helical segment; the sequence is IPLIMSVLYVWAQLN. Residues 138-154 lie on the Cytoplasmic side of the membrane; the sequence is RDMIVSFWFGTRFKACY. The chain crosses the membrane as a helical span at residues 155 to 166; sequence LPWVILGFNYII. The Lumenal portion of the chain corresponds to 167 to 170; sequence GGSV. The helical transmembrane segment at 171-189 threads the bilayer; it reads INELIGNLVGHLYFFLMFR. The Cytoplasmic portion of the chain corresponds to 190-251; sequence YPMDLGGRNF…WGQGFRLGDQ (62 aa). At serine 201 the chain carries Phosphoserine. Threonine 202 carries the phosphothreonine modification. Serine 226 is subject to Phosphoserine. The tract at residues 229 to 251 is disordered; the sequence is RAADQNGGGGRHNWGQGFRLGDQ. An SHP-box motif is present at residues 241–248; the sequence is NWGQGFRL.

This sequence belongs to the derlin family. In terms of assembly, homotetramer. The four subunits of the tetramer are arranged in a twofold symmetry. Forms heterooligomers with DERL2 and DERL3; binding to DERL3 is poorer than that between DERL2 and DERL3. Interacts (via SHP-box motif) with VCP. Interacts with AMFR, SELENOS, SEL1L, SELENOK and SYVN1, as well as with SEL1L-SYVN1 and VCP-SELENOS protein complexes; this interaction is weaker than that observed between DERL2 and these complexes. Interacts with NGLY1 and YOD1. Does not bind to EDEM1. Interacts with DNAJB9. Interacts with RNF103. Interacts with HM13. Interacts with XBP1 isoform 1 (via luminal/ectodomain domain); the interaction obviates the need for ectodomain shedding prior HM13/SPP-mediated XBP1 isoform 1 cleavage. Interacts with the signal recognition particle/SRP and the SRP receptor; in the process of endoplasmic reticulum stress-induced pre-emptive quality control. May interact with UBXN6. Interacts with ZFAND2B; probably through VCP. Interacts with CCDC47. Interacts with C18orf32. May interact with TRAM1. Forms a complex with SVIP and VCP/p97. As to quaternary structure, (Microbial infection) Interacts with the cytomegalovirus US11 protein. As to expression, ubiquitous.

The protein localises to the endoplasmic reticulum membrane. Its function is as follows. Functional component of endoplasmic reticulum-associated degradation (ERAD) for misfolded lumenal proteins. Forms homotetramers which encircle a large channel traversing the endoplasmic reticulum (ER) membrane. This allows the retrotranslocation of misfolded proteins from the ER into the cytosol where they are ubiquitinated and degraded by the proteasome. The channel has a lateral gate within the membrane which provides direct access to membrane proteins with no need to reenter the ER lumen first. May mediate the interaction between VCP and the misfolded protein. Also involved in endoplasmic reticulum stress-induced pre-emptive quality control, a mechanism that selectively attenuates the translocation of newly synthesized proteins into the endoplasmic reticulum and reroutes them to the cytosol for proteasomal degradation. By controlling the steady-state expression of the IGF1R receptor, indirectly regulates the insulin-like growth factor receptor signaling pathway. (Microbial infection) In case of infection by cytomegaloviruses, it plays a central role in the export from the ER and subsequent degradation of MHC class I heavy chains via its interaction with US11 viral protein, which recognizes and associates with MHC class I heavy chains. Also participates in the degradation process of misfolded cytomegalovirus US2 protein. This Homo sapiens (Human) protein is Derlin-1.